Here is a 208-residue protein sequence, read N- to C-terminus: MDKFTVLTAIAAPLPVANVDTDKIIPARFLKTIKRTGLGTHLFDAMRYIDGQENPDFVLNREPYRQAQILVTHENFGCGSSREHAPWALLDFGIRCVIAPDFADIFYNNSFKNGILPIRLPRDICDRLMDDAGNGANSRLTVDLERQVVVRPNGEEIPFEIDPFRRHLLLNGLDDIGQTLQRREAIDRFEENRTVTQPWFPRITLPAN.

Belongs to the LeuD family. LeuD type 1 subfamily. Heterodimer of LeuC and LeuD.

The enzyme catalyses (2R,3S)-3-isopropylmalate = (2S)-2-isopropylmalate. Its pathway is amino-acid biosynthesis; L-leucine biosynthesis; L-leucine from 3-methyl-2-oxobutanoate: step 2/4. In terms of biological role, catalyzes the isomerization between 2-isopropylmalate and 3-isopropylmalate, via the formation of 2-isopropylmaleate. The chain is 3-isopropylmalate dehydratase small subunit from Granulibacter bethesdensis (strain ATCC BAA-1260 / CGDNIH1).